A 113-amino-acid polypeptide reads, in one-letter code: ATP-dependent Clp protease adapter protein ClpS (113 aa).

The segment covering 1–11 (MTRPTIPPGPP) has biased composition (pro residues). Disordered regions lie at residues 1–24 (MTRP…ERTE) and 92–113 (TAHA…SEGE).

The protein belongs to the ClpS family. Binds to the N-terminal domain of the chaperone ClpA.

Involved in the modulation of the specificity of the ClpAP-mediated ATP-dependent protein degradation. In Deinococcus radiodurans (strain ATCC 13939 / DSM 20539 / JCM 16871 / CCUG 27074 / LMG 4051 / NBRC 15346 / NCIMB 9279 / VKM B-1422 / R1), this protein is ATP-dependent Clp protease adapter protein ClpS.